We begin with the raw amino-acid sequence, 283 residues long: Elongation factor Ts (283 aa).

The involved in Mg(2+) ion dislocation from EF-Tu stretch occupies residues 80-83 (TDFV).

The protein belongs to the EF-Ts family.

It localises to the cytoplasm. Associates with the EF-Tu.GDP complex and induces the exchange of GDP to GTP. It remains bound to the aminoacyl-tRNA.EF-Tu.GTP complex up to the GTP hydrolysis stage on the ribosome. This chain is Elongation factor Ts, found in Salmonella paratyphi A (strain ATCC 9150 / SARB42).